We begin with the raw amino-acid sequence, 353 residues long: Photosystem II protein D1 (353 aa).

The residue at position 2 (T2) is an N-acetylthreonine. T2 is modified (phosphothreonine). 3 consecutive transmembrane segments (helical) span residues Y29 to S46, H118 to L133, and W142 to A156. Residue H118 participates in chlorophyll a binding. Y126 is a binding site for pheophytin a. [CaMn4O5] cluster is bound by residues D170 and E189. A helical transmembrane segment spans residues F197 to L218. H198 is a chlorophyll a binding site. A quinone contacts are provided by residues H215 and S264–F265. H215 provides a ligand contact to Fe cation. Fe cation is bound at residue H272. Residues F274–L288 form a helical membrane-spanning segment. Positions 332, 333, 342, and 344 each coordinate [CaMn4O5] cluster. Residues A345–G353 constitute a propeptide that is removed on maturation.

Belongs to the reaction center PufL/M/PsbA/D family. As to quaternary structure, PSII is composed of 1 copy each of membrane proteins PsbA, PsbB, PsbC, PsbD, PsbE, PsbF, PsbH, PsbI, PsbJ, PsbK, PsbL, PsbM, PsbT, PsbX, PsbY, PsbZ, Psb30/Ycf12, at least 3 peripheral proteins of the oxygen-evolving complex and a large number of cofactors. It forms dimeric complexes. The D1/D2 heterodimer binds P680, chlorophylls that are the primary electron donor of PSII, and subsequent electron acceptors. It shares a non-heme iron and each subunit binds pheophytin, quinone, additional chlorophylls, carotenoids and lipids. D1 provides most of the ligands for the Mn4-Ca-O5 cluster of the oxygen-evolving complex (OEC). There is also a Cl(-1) ion associated with D1 and D2, which is required for oxygen evolution. The PSII complex binds additional chlorophylls, carotenoids and specific lipids. serves as cofactor. Tyr-161 forms a radical intermediate that is referred to as redox-active TyrZ, YZ or Y-Z. In terms of processing, C-terminally processed by CTPA; processing is essential to allow assembly of the oxygen-evolving complex and thus photosynthetic growth.

It localises to the plastid. The protein resides in the chloroplast thylakoid membrane. It carries out the reaction 2 a plastoquinone + 4 hnu + 2 H2O = 2 a plastoquinol + O2. Functionally, photosystem II (PSII) is a light-driven water:plastoquinone oxidoreductase that uses light energy to abstract electrons from H(2)O, generating O(2) and a proton gradient subsequently used for ATP formation. It consists of a core antenna complex that captures photons, and an electron transfer chain that converts photonic excitation into a charge separation. The D1/D2 (PsbA/PsbD) reaction center heterodimer binds P680, the primary electron donor of PSII as well as several subsequent electron acceptors. In Marchantia polymorpha (Common liverwort), this protein is Photosystem II protein D1.